Reading from the N-terminus, the 66-residue chain is Large ribosomal subunit protein uL29 (66 aa).

The protein belongs to the universal ribosomal protein uL29 family.

The sequence is that of Large ribosomal subunit protein uL29 from Geobacillus kaustophilus (strain HTA426).